Reading from the N-terminus, the 137-residue chain is Transcription antitermination protein NusB (137 aa).

This sequence belongs to the NusB family.

Involved in transcription antitermination. Required for transcription of ribosomal RNA (rRNA) genes. Binds specifically to the boxA antiterminator sequence of the ribosomal RNA (rrn) operons. This chain is Transcription antitermination protein NusB, found in Haemophilus ducreyi (strain 35000HP / ATCC 700724).